The chain runs to 394 residues: MTHEPLTASVGIVTPQHVRLFGASTPLQLDGGTLLHSVDVSYETYGTLNQERSNAVLICHALSGNAHAAGYHSKDDKRPGWWDHYIGPGKPFDTNRYFVIASNNLGGCDGTTGPSSIDPATGMPYGLNFPMITIGDIVRVQHALVRQLGIERLMAVVGGSMGGMQALQWALDYPHMVPASVIIAAAPRLTAQNIAFNAVARQAIMADPHFNGGDYYTLPGDPTTKARPESGLALARMMAHITYLSEQGLHERFGRRLQDRDALSYGFETDFAVESYLSYQGSSFVKRFDANSYLYITKAMDYFDPFPDAETTVQRLTGVESHFLVMSFDTDWRFDTSRSKELVRILHRSLKDCTFQEFSSPAGHDAFLLPHPSYEKSLGSFLLRTWQSITGGQA.

An AB hydrolase-1 domain is found at 54 to 368 (NAVLICHALS…SSPAGHDAFL (315 aa)). Serine 160 acts as the Nucleophile in catalysis. Position 236 (arginine 236) interacts with substrate. Active-site residues include aspartate 331 and histidine 364. Position 365 (aspartate 365) interacts with substrate.

This sequence belongs to the AB hydrolase superfamily. MetX family. In terms of assembly, homodimer.

It is found in the cytoplasm. The enzyme catalyses L-homoserine + succinyl-CoA = O-succinyl-L-homoserine + CoA. The protein operates within amino-acid biosynthesis; L-methionine biosynthesis via de novo pathway; O-succinyl-L-homoserine from L-homoserine: step 1/1. Its function is as follows. Transfers a succinyl group from succinyl-CoA to L-homoserine, forming succinyl-L-homoserine. In Magnetococcus marinus (strain ATCC BAA-1437 / JCM 17883 / MC-1), this protein is Homoserine O-succinyltransferase.